The primary structure comprises 425 residues: Dihydroorotase (425 aa).

His-59 and His-61 together coordinate Zn(2+). Residues 61–63 (HLR) and Asn-93 contribute to the substrate site. Residues Asp-151, His-178, and His-231 each coordinate Zn(2+). Asn-277 provides a ligand contact to substrate. Position 304 (Asp-304) interacts with Zn(2+). Asp-304 is an active-site residue. Substrate-binding positions include His-308 and 322-323 (FG).

This sequence belongs to the metallo-dependent hydrolases superfamily. DHOase family. Class I DHOase subfamily. Zn(2+) is required as a cofactor.

The catalysed reaction is (S)-dihydroorotate + H2O = N-carbamoyl-L-aspartate + H(+). It participates in pyrimidine metabolism; UMP biosynthesis via de novo pathway; (S)-dihydroorotate from bicarbonate: step 3/3. Its function is as follows. Catalyzes the reversible cyclization of carbamoyl aspartate to dihydroorotate. The chain is Dihydroorotase from Staphylococcus epidermidis (strain ATCC 35984 / DSM 28319 / BCRC 17069 / CCUG 31568 / BM 3577 / RP62A).